Here is a 396-residue protein sequence, read N- to C-terminus: Sialyltransferase-like protein 2 (396 aa).

The Cytoplasmic segment spans residues 1–6 (MKRRHL). A helical; Signal-anchor for type II membrane protein transmembrane segment spans residues 7–23 (PPVLVLLLLSILSLSFR). Residues 24–396 (RRLLVLQGPP…FTVPPVRLHR (373 aa)) lie on the Lumenal side of the membrane. N-linked (GlcNAc...) asparagine glycans are attached at residues N72, N260, and N304.

The protein belongs to the glycosyltransferase 29 family.

The protein localises to the golgi apparatus membrane. Functionally, does not possess sialyltransferase-like activity in vitro. The protein is Sialyltransferase-like protein 2 of Oryza sativa subsp. indica (Rice).